A 107-amino-acid polypeptide reads, in one-letter code: uncharacterized protein (107 aa).

This is an uncharacterized protein from Microplitis demolitor (Parasitoid wasp).